Consider the following 642-residue polypeptide: Threonine--tRNA ligase (642 aa).

Positions 1 to 61 (MPVITLPDGS…DTDSELSIIT (61 aa)) constitute a TGS domain. The catalytic stretch occupies residues 243–534 (DHRKIGKQLD…LIEEYAGKFP (292 aa)). Positions 334, 385, and 511 each coordinate Zn(2+).

This sequence belongs to the class-II aminoacyl-tRNA synthetase family. Homodimer. Requires Zn(2+) as cofactor.

The protein localises to the cytoplasm. The catalysed reaction is tRNA(Thr) + L-threonine + ATP = L-threonyl-tRNA(Thr) + AMP + diphosphate + H(+). Its function is as follows. Catalyzes the attachment of threonine to tRNA(Thr) in a two-step reaction: L-threonine is first activated by ATP to form Thr-AMP and then transferred to the acceptor end of tRNA(Thr). Also edits incorrectly charged L-seryl-tRNA(Thr). The polypeptide is Threonine--tRNA ligase (Shewanella woodyi (strain ATCC 51908 / MS32)).